A 127-amino-acid chain; its full sequence is UPF0102 protein NFA_41430 (127 aa).

This sequence belongs to the UPF0102 family.

The sequence is that of UPF0102 protein NFA_41430 from Nocardia farcinica (strain IFM 10152).